The sequence spans 217 residues: FMN-dependent NADH:quinone oxidoreductase (217 aa).

FMN-binding positions include Ser-10 and Ser-16–Ser-18.

Belongs to the azoreductase type 1 family. Homodimer. The cofactor is FMN.

The catalysed reaction is 2 a quinone + NADH + H(+) = 2 a 1,4-benzosemiquinone + NAD(+). It catalyses the reaction N,N-dimethyl-1,4-phenylenediamine + anthranilate + 2 NAD(+) = 2-(4-dimethylaminophenyl)diazenylbenzoate + 2 NADH + 2 H(+). Quinone reductase that provides resistance to thiol-specific stress caused by electrophilic quinones. In terms of biological role, also exhibits azoreductase activity. Catalyzes the reductive cleavage of the azo bond in aromatic azo compounds to the corresponding amines. The protein is FMN-dependent NADH:quinone oxidoreductase of Polaromonas naphthalenivorans (strain CJ2).